The following is a 38-amino-acid chain: Potassium channel toxin alpha-KTx 2.13 (38 aa).

3 disulfide bridges follow: Cys7/Cys29, Cys13/Cys34, and Cys17/Cys36.

The protein belongs to the short scorpion toxin superfamily. Potassium channel inhibitor family. Alpha-KTx 02 subfamily. Expressed by the venom gland.

It is found in the secreted. Selective inhibitor of voltage-gated potassium channels, blocks the Kv1.2/KCNA2 (Kd=1.3 nM) and Kv1.3/KCNA3 (Kd=7.2 nM) channels. Association and dissociation rates of the toxin are slower for Kv1.2/KCNA2 than for Kv1.3/KCNA3. This is Potassium channel toxin alpha-KTx 2.13 from Centruroides suffusus (Durango bark scorpion).